We begin with the raw amino-acid sequence, 338 residues long: Malate dehydrogenase, mitochondrial (338 aa).

Residues Met1–Asn24 constitute a mitochondrion transit peptide. Residues Gly31–Gly37 and Asp57 contribute to the NAD(+) site. O-linked (GlcNAc) serine glycosylation occurs at Ser33. N6-acetyllysine; alternate is present on residues Lys78 and Lys91. An N6-succinyllysine; alternate mark is found at Lys78 and Lys91. Positions 104 and 110 each coordinate substrate. Residues Asn117 and Ile140–Asn142 each bind NAD(+). Asn142 contacts substrate. Lys165 is modified (N6-acetyllysine). Arg176 is a binding site for substrate. Lys185 is subject to N6-acetyllysine; alternate. Residue Lys185 is modified to N6-succinyllysine; alternate. His200 acts as the Proton acceptor in catalysis. N6-succinyllysine is present on Lys203. Lys215 and Lys239 each carry N6-acetyllysine; alternate. Residues Lys215 and Lys239 each carry the N6-succinyllysine; alternate modification. The residue at position 239 (Lys239) is an N6-malonyllysine; alternate. Phosphoserine is present on Ser246. Met251 is an NAD(+) binding site. Lys269 is subject to N6-succinyllysine. 5 positions are modified to N6-acetyllysine; alternate: Lys296, Lys301, Lys307, Lys314, and Lys324. Lys296, Lys301, Lys307, Lys314, and Lys324 each carry N6-succinyllysine; alternate. N6-malonyllysine; alternate is present on Lys307. At Ser326 the chain carries Phosphoserine. N6-acetyllysine; alternate is present on residues Lys328, Lys329, and Lys335. N6-succinyllysine; alternate is present on Lys328. The residue at position 329 (Lys329) is an N6-malonyllysine; alternate. Lys335 carries the post-translational modification N6-succinyllysine; alternate.

Belongs to the LDH/MDH superfamily. MDH type 1 family. As to quaternary structure, homodimer. Acetylation is enhanced by up to 67% after treatment either with trichostin A (TSA) or with nicotinamide (NAM) with the appearance of tri- and tetraacetylations. Glucose also increases acetylation by about 60%.

It is found in the mitochondrion matrix. The catalysed reaction is (S)-malate + NAD(+) = oxaloacetate + NADH + H(+). With respect to regulation, enzyme activity is enhanced by acetylation. In Homo sapiens (Human), this protein is Malate dehydrogenase, mitochondrial (MDH2).